We begin with the raw amino-acid sequence, 554 residues long: Glucose-binding protein GlcS (554 aa).

Over 1–17 the chain is Cytoplasmic; sequence MKRKYPYSLAKGLTSTQ. Residues 18–38 traverse the membrane as a helical segment; it reads IAVIVAVIVIVIIIGVVAGFV. The Extracellular segment spans residues 39 to 525; that stretch reads LTKGPSTTAV…YGLTNNTQKT (487 aa). Residues 526–546 form a helical membrane-spanning segment; that stretch reads SNSVMLFLLPFLALPLAIASI. Residues 547–554 lie on the Cytoplasmic side of the membrane; sequence DNKYYLLK.

Belongs to the bacterial solute-binding protein 1 family. As to quaternary structure, the complex is composed of two ATP-binding proteins (GlcV), two transmembrane proteins (GlcT and GlcU) and a solute-binding protein (GlcS).

It localises to the cell membrane. With respect to regulation, binding of glucose is strongly inhibited by galactose and mannose. Part of the ABC transporter complex GlcSTUV involved in glucose uptake. Binds glucose. Can also bind galactose and mannose. This Saccharolobus solfataricus (strain ATCC 35092 / DSM 1617 / JCM 11322 / P2) (Sulfolobus solfataricus) protein is Glucose-binding protein GlcS.